The primary structure comprises 376 residues: O-demethylpuromycin-O-methyltransferase (376 aa).

Residues 1-28 (MAPTEATRGGPADPAPAPEAHRGGHTEH) form a disordered region. Residues 19–28 (EAHRGGHTEH) are compositionally biased toward basic and acidic residues. Residues D235 and 261 to 263 (GDF) each bind S-adenosyl-L-methionine. H281 acts as the Proton acceptor in catalysis.

The protein belongs to the class I-like SAM-binding methyltransferase superfamily. Cation-independent O-methyltransferase family.

It catalyses the reaction O-demethylpuromycin + S-adenosyl-L-methionine = puromycin + S-adenosyl-L-homocysteine + H(+). The chain is O-demethylpuromycin-O-methyltransferase (dmpM) from Streptomyces alboniger.